Consider the following 438-residue polypeptide: Putative metabolite transport protein HI_0281 (438 aa).

Residues 1–17 (MSTQLRNNPMKVALASM) are Cytoplasmic-facing. Residues 18 to 38 (VGTAIEFFDYYIYAAAAVLVF) form a helical membrane-spanning segment. Residues 39–52 (NTQFFHSDDPLSND) are Periplasmic-facing. The helical transmembrane segment at 53-73 (LLSLSTLALAFFARPIGSALF) threads the bilayer. The Cytoplasmic portion of the chain corresponds to 74–85 (GHFGDKIGRKKT). The helical transmembrane segment at 86–106 (LVASLVLMGGSTVVIGLLPNY) threads the bilayer. The Periplasmic portion of the chain corresponds to 107 to 115 (AQIGIWAPI). A helical transmembrane segment spans residues 116–136 (LLCVCRVGQGIGLGGEWGGAA). Over 137–156 (LVATENAPEGKRAWYGTFPQ) the chain is Cytoplasmic. Residues 157-177 (LGAPIGLFVANGTFFLVSYLL) form a helical membrane-spanning segment. Residues 178 to 181 (GHNA) lie on the Periplasmic side of the membrane. Residues 182-202 (LVEWAWRIPFVSSILLVAVGL) traverse the membrane as a helical segment. At 203-239 (YVRLTLHESHVFVEAEQKGKKLNAPVSVVFTKHLKPM) the chain is on the cytoplasmic side. Residues 240–260 (VIGTFIMVATYSLFYIMTAFA) form a helical membrane-spanning segment. The Periplasmic portion of the chain corresponds to 261–286 (QAYSRTAPKLSEAGYALGLGIPANTF). A helical membrane pass occupies residues 287-307 (TGLLLISAIVFGIFISISGFY). Topologically, residues 308–314 (ADKIGRR) are cytoplasmic. Residues 315–336 (KWLIWVTIAIGVLGLAMPLFLE) traverse the membrane as a helical segment. Topologically, residues 337-342 (NGTPVS) are periplasmic. A helical transmembrane segment spans residues 343-363 (VFAFLVIGMAIMGMTFGPMAA). The Cytoplasmic portion of the chain corresponds to 364 to 377 (LLPELFPTEVRYSG). Residues 378–398 (ASLAYNLASIIGATIAAMISL) traverse the membrane as a helical segment. The Periplasmic segment spans residues 399 to 405 (KINASFG). The chain crosses the membrane as a helical span at residues 406–426 (VMGVGIYLAINALMTFLALLA). Over 427-438 (SKETKNVDLTEI) the chain is Cytoplasmic.

This sequence belongs to the major facilitator superfamily. Sugar transporter (TC 2.A.1.1) family.

It localises to the cell inner membrane. The chain is Putative metabolite transport protein HI_0281 from Haemophilus influenzae (strain ATCC 51907 / DSM 11121 / KW20 / Rd).